The following is a 91-amino-acid chain: Non-specific lipid-transfer protein 1 (91 aa).

4 disulfide bridges follow: Cys4/Cys51, Cys14/Cys28, Cys29/Cys74, and Cys49/Cys88.

Expressed in seeds (at protein level).

Its function is as follows. Plant non-specific lipid-transfer proteins transfer phospholipids as well as galactolipids across membranes. May play a role in wax or cutin deposition in the cell walls of expanding epidermal cells and certain secretory tissues. Binds to both saturated and unsaturated lipids, with the highest binding efficiency for linoleic acid, followed by linolenic acid. The chain is Non-specific lipid-transfer protein 1 from Foeniculum vulgare (Fennel).